The sequence spans 89 residues: Small ribosomal subunit protein uS15 (89 aa).

This sequence belongs to the universal ribosomal protein uS15 family. As to quaternary structure, part of the 30S ribosomal subunit. Forms a bridge to the 50S subunit in the 70S ribosome, contacting the 23S rRNA.

In terms of biological role, one of the primary rRNA binding proteins, it binds directly to 16S rRNA where it helps nucleate assembly of the platform of the 30S subunit by binding and bridging several RNA helices of the 16S rRNA. Its function is as follows. Forms an intersubunit bridge (bridge B4) with the 23S rRNA of the 50S subunit in the ribosome. In Streptococcus gordonii (strain Challis / ATCC 35105 / BCRC 15272 / CH1 / DL1 / V288), this protein is Small ribosomal subunit protein uS15.